Here is a 252-residue protein sequence, read N- to C-terminus: 3-dehydroquinate dehydratase (252 aa).

3-dehydroquinate-binding positions include Ser21, 46-48, and Arg82; that span reads EWR. The active-site Proton donor/acceptor is His143. Lys170 (schiff-base intermediate with substrate) is an active-site residue. 3-dehydroquinate contacts are provided by Arg213, Ser232, and Gln236.

It belongs to the type-I 3-dehydroquinase family. Homodimer.

It carries out the reaction 3-dehydroquinate = 3-dehydroshikimate + H2O. Its pathway is metabolic intermediate biosynthesis; chorismate biosynthesis; chorismate from D-erythrose 4-phosphate and phosphoenolpyruvate: step 3/7. In terms of biological role, involved in the third step of the chorismate pathway, which leads to the biosynthesis of aromatic amino acids. Catalyzes the cis-dehydration of 3-dehydroquinate (DHQ) and introduces the first double bond of the aromatic ring to yield 3-dehydroshikimate. The chain is 3-dehydroquinate dehydratase from Escherichia coli O157:H7.